Here is a 426-residue protein sequence, read N- to C-terminus: Tyrosine--tRNA ligase (426 aa).

Residue Y36 participates in L-tyrosine binding. Residues 41 to 50 (PTAPSLHVGH) carry the 'HIGH' region motif. L-tyrosine-binding residues include Y174 and Q178. Positions 234-238 (KLGKS) match the 'KMSKS' region motif. K237 contacts ATP. One can recognise an S4 RNA-binding domain in the interval 359–416 (DGIVDLLVASGLSPSRGAARRTIDEGGVLVNNIRIQSEEWTPRTSDFLHGRWLVLRRG).

The protein belongs to the class-I aminoacyl-tRNA synthetase family. TyrS type 1 subfamily. Homodimer.

Its subcellular location is the cytoplasm. It carries out the reaction tRNA(Tyr) + L-tyrosine + ATP = L-tyrosyl-tRNA(Tyr) + AMP + diphosphate + H(+). Catalyzes the attachment of tyrosine to tRNA(Tyr) in a two-step reaction: tyrosine is first activated by ATP to form Tyr-AMP and then transferred to the acceptor end of tRNA(Tyr). This chain is Tyrosine--tRNA ligase, found in Mycobacterium leprae (strain TN).